Here is a 213-residue protein sequence, read N- to C-terminus: Protein-L-isoaspartate O-methyltransferase (213 aa).

Residue Ser-62 is part of the active site.

This sequence belongs to the methyltransferase superfamily. L-isoaspartyl/D-aspartyl protein methyltransferase family.

The protein localises to the cytoplasm. It carries out the reaction [protein]-L-isoaspartate + S-adenosyl-L-methionine = [protein]-L-isoaspartate alpha-methyl ester + S-adenosyl-L-homocysteine. Its function is as follows. Catalyzes the methyl esterification of L-isoaspartyl residues in peptides and proteins that result from spontaneous decomposition of normal L-aspartyl and L-asparaginyl residues. It plays a role in the repair and/or degradation of damaged proteins. This chain is Protein-L-isoaspartate O-methyltransferase, found in Desulfovibrio desulfuricans (strain ATCC 27774 / DSM 6949 / MB).